The primary structure comprises 196 residues: Protein GrpE (196 aa).

Residues Met1–Pro39 form a disordered region.

The protein belongs to the GrpE family. As to quaternary structure, homodimer.

The protein resides in the cytoplasm. Participates actively in the response to hyperosmotic and heat shock by preventing the aggregation of stress-denatured proteins, in association with DnaK and GrpE. It is the nucleotide exchange factor for DnaK and may function as a thermosensor. Unfolded proteins bind initially to DnaJ; upon interaction with the DnaJ-bound protein, DnaK hydrolyzes its bound ATP, resulting in the formation of a stable complex. GrpE releases ADP from DnaK; ATP binding to DnaK triggers the release of the substrate protein, thus completing the reaction cycle. Several rounds of ATP-dependent interactions between DnaJ, DnaK and GrpE are required for fully efficient folding. The protein is Protein GrpE of Escherichia coli (strain SMS-3-5 / SECEC).